The following is a 913-amino-acid chain: ER degradation-enhancing alpha-mannosidase-like protein 3 (913 aa).

A signal peptide spans 1-15; that stretch reads MGCPAVEARRWGDMW. Residue Asn-104 is glycosylated (N-linked (GlcNAc...) asparagine). Glu-132 functions as the Proton donor in the catalytic mechanism. A glycan (N-linked (GlcNAc...) asparagine) is linked at Asn-181. Asp-279 is an active-site residue. Catalysis depends on Glu-373, which acts as the Proton donor. The active site involves Glu-391. Thr-477 contacts Ca(2+). Asn-497 carries an N-linked (GlcNAc...) asparagine glycan. The PA domain occupies 660-766; the sequence is LSKHLAGAQG…KEGNIILDAI (107 aa). Asn-797 is a glycosylation site (N-linked (GlcNAc...) asparagine). The disordered stretch occupies residues 823 to 895; that stretch reads EESPVSQPEV…NKVQPMESIL (73 aa). Residues 826-839 show a composition bias toward low complexity; it reads PVSQPEVPSSDSPS. Residues 843–866 show a composition bias toward basic and acidic residues; that stretch reads RTSERDITPESQEHKTEETEHSPK. Residues 910–913 carry the Prevents secretion from ER motif; that stretch reads KDEL.

The protein belongs to the glycosyl hydrolase 47 family. Ca(2+) serves as cofactor.

It is found in the endoplasmic reticulum lumen. It carries out the reaction N(4)-(alpha-D-Man-(1-&gt;2)-alpha-D-Man-(1-&gt;2)-alpha-D-Man-(1-&gt;3)-[alpha-D-Man-(1-&gt;2)-alpha-D-Man-(1-&gt;3)-[alpha-D-Man-(1-&gt;2)-alpha-D-Man-(1-&gt;6)]-alpha-D-Man-(1-&gt;6)]-beta-D-Man-(1-&gt;4)-beta-D-GlcNAc-(1-&gt;4)-beta-D-GlcNAc)-L-asparaginyl-[protein] (N-glucan mannose isomer 9A1,2,3B1,2,3) + 4 H2O = N(4)-(alpha-D-Man-(1-&gt;3)-[alpha-D-Man-(1-&gt;3)-[alpha-D-Man-(1-&gt;6)]-alpha-D-Man-(1-&gt;6)]-beta-D-Man-(1-&gt;4)-beta-D-GlcNAc-(1-&gt;4)-beta-D-GlcNAc)-L-asparaginyl-[protein] (N-glucan mannose isomer 5A1,2) + 4 beta-D-mannose. The catalysed reaction is N(4)-(alpha-D-Man-(1-&gt;2)-alpha-D-Man-(1-&gt;2)-alpha-D-Man-(1-&gt;3)-[alpha-D-Man-(1-&gt;3)-[alpha-D-Man-(1-&gt;2)-alpha-D-Man-(1-&gt;6)]-alpha-D-Man-(1-&gt;6)]-beta-D-Man-(1-&gt;4)-beta-D-GlcNAc-(1-&gt;4)-beta-D-GlcNAc)-L-asparaginyl-[protein] (N-glucan mannose isomer 8A1,2,3B1,3) + 3 H2O = N(4)-(alpha-D-Man-(1-&gt;3)-[alpha-D-Man-(1-&gt;3)-[alpha-D-Man-(1-&gt;6)]-alpha-D-Man-(1-&gt;6)]-beta-D-Man-(1-&gt;4)-beta-D-GlcNAc-(1-&gt;4)-beta-D-GlcNAc)-L-asparaginyl-[protein] (N-glucan mannose isomer 5A1,2) + 3 beta-D-mannose. It functions in the pathway protein modification; protein glycosylation. Functionally, may be involved in endoplasmic reticulum-associated degradation (ERAD). The polypeptide is ER degradation-enhancing alpha-mannosidase-like protein 3 (edem3) (Xenopus laevis (African clawed frog)).